The sequence spans 302 residues: Mitochondrial glycine transporter (302 aa).

3 Solcar repeats span residues 22–112 (HPVF…LKHH), 119–203 (PKPL…AKKL), and 213–297 (FSPV…MMEK). A run of 6 helical transmembrane segments spans residues 28 to 53 (FVCG…TRIQ), 87 to 113 (GVSP…KHHF), 125 to 150 (VMLG…TRYE), 178 to 201 (GLTA…TRAK), 217 to 243 (LNFS…KTHM), and 272 to 290 (GGVP…AWTV).

It belongs to the mitochondrial carrier (TC 2.A.29) family. SLC25A38 subfamily.

It is found in the mitochondrion inner membrane. It carries out the reaction glycine(in) = glycine(out). Mitochondrial glycine transporter that imports glycine into the mitochondrial matrix. Plays an important role in providing glycine for the first enzymatic step in heme biosynthesis, the condensation of glycine with succinyl-CoA to produce 5-aminolevulinate (ALA) in the mitochondrial matrix. Required during erythropoiesis. In terms of biological role, may play a role as pro-apoptotic protein that induces caspase-dependent apoptosis. This Xenopus laevis (African clawed frog) protein is Mitochondrial glycine transporter.